The chain runs to 438 residues: MSTATMPYVAFKVKDISLAAWGRKEIELAEAEMPGLMALRAEYKNEQPLAGARIAGCLHMTIQTAVLIETLIALGAEVTWSSCNIFSTQDQAAAAIAAAGIQVYAWKGLNEPDFDWCIEQTLFFGEDRKPLNMILDDGGDLTNMVIDRYPHLVEGIKGLSEETTTGVHRLYERVKAGTLPMPAINVNDSVTKSKFDNKYGCKESAVDAVRRATDIMLAGKRVVVCGYGDVGKGTAASFRGAGSIVTVTEIDPICALQAAMDGFEVKKLNTVVGNADIIITTTGNKDIVLGSHFEQMKDKTIVCNIGHFDNEIDMAWLNKNHGASKIEIKPQVDKYTIAGKDILILAEGRLVNLGCATGHPSFVMSNSFTNQTLAQIELWKNSAAYNNDVYMLPKHLDEKVAFLHLAKLGVELEVLRDDQAAYIGVGVDGPFKPEYYRY.

Substrate-binding residues include T61, D137, and E162. Residue T163–T165 participates in NAD(+) binding. The substrate site is built by K192 and D196. NAD(+) is bound by residues N197, G226–G231, E249, N284, I305–H307, and N352.

It belongs to the adenosylhomocysteinase family. It depends on NAD(+) as a cofactor.

It localises to the cytoplasm. It catalyses the reaction S-adenosyl-L-homocysteine + H2O = L-homocysteine + adenosine. It participates in amino-acid biosynthesis; L-homocysteine biosynthesis; L-homocysteine from S-adenosyl-L-homocysteine: step 1/1. May play a key role in the regulation of the intracellular concentration of adenosylhomocysteine. This Flavobacterium psychrophilum (strain ATCC 49511 / DSM 21280 / CIP 103535 / JIP02/86) protein is Adenosylhomocysteinase.